Reading from the N-terminus, the 296-residue chain is tRNA dimethylallyltransferase (296 aa).

Position 9 to 16 (9 to 16 (GTTASGKS)) interacts with ATP. 11-16 (TASGKS) is a substrate binding site. Residues 34 to 37 (DSLA) form an interaction with substrate tRNA region.

Belongs to the IPP transferase family. In terms of assembly, monomer. Requires Mg(2+) as cofactor.

It catalyses the reaction adenosine(37) in tRNA + dimethylallyl diphosphate = N(6)-dimethylallyladenosine(37) in tRNA + diphosphate. Functionally, catalyzes the transfer of a dimethylallyl group onto the adenine at position 37 in tRNAs that read codons beginning with uridine, leading to the formation of N6-(dimethylallyl)adenosine (i(6)A). The chain is tRNA dimethylallyltransferase from Campylobacter curvus (strain 525.92).